The chain runs to 58 residues: Large ribosomal subunit protein uL30 (58 aa).

This sequence belongs to the universal ribosomal protein uL30 family. As to quaternary structure, part of the 50S ribosomal subunit.

The sequence is that of Large ribosomal subunit protein uL30 from Wigglesworthia glossinidia brevipalpis.